We begin with the raw amino-acid sequence, 244 residues long: NAD(P)H-quinone oxidoreductase subunit K (244 aa).

[4Fe-4S] cluster contacts are provided by C60, C61, C125, and C156.

It belongs to the complex I 20 kDa subunit family. As to quaternary structure, NDH-1 can be composed of about 15 different subunits; different subcomplexes with different compositions have been identified which probably have different functions. [4Fe-4S] cluster is required as a cofactor.

It is found in the cellular thylakoid membrane. The catalysed reaction is a plastoquinone + NADH + (n+1) H(+)(in) = a plastoquinol + NAD(+) + n H(+)(out). It catalyses the reaction a plastoquinone + NADPH + (n+1) H(+)(in) = a plastoquinol + NADP(+) + n H(+)(out). In terms of biological role, NDH-1 shuttles electrons from an unknown electron donor, via FMN and iron-sulfur (Fe-S) centers, to quinones in the respiratory and/or the photosynthetic chain. The immediate electron acceptor for the enzyme in this species is believed to be plastoquinone. Couples the redox reaction to proton translocation, and thus conserves the redox energy in a proton gradient. Cyanobacterial NDH-1 also plays a role in inorganic carbon-concentration. This Prochlorococcus marinus (strain AS9601) protein is NAD(P)H-quinone oxidoreductase subunit K.